We begin with the raw amino-acid sequence, 385 residues long: Mitochondrial fission regulator 2 (385 aa).

Residue S2 is modified to N-acetylserine. S119 is subject to Phosphoserine. The segment at 195–268 (SVDPDQLPGS…SHHSKSQRNK (74 aa)) is disordered. The segment covering 207-216 (SPPPPPPLPP) has biased composition (pro residues). Over residues 231-257 (PGSNNICDSDNPATEMSKQNPAANKTN) the composition is skewed to polar residues. Residues S291 and S328 each carry the phosphoserine modification. Residues 331–363 (KENRSWESSPFSSPETSRFGHHISQSEGQRTKE) form a disordered region. Polar residues predominate over residues 336–346 (WESSPFSSPET).

It belongs to the MTFR1 family.

It localises to the mitochondrion. May play a role in mitochondrial aerobic respiration essentially in the testis. Can also promote mitochondrial fission. The sequence is that of Mitochondrial fission regulator 2 (MTFR2) from Homo sapiens (Human).